The chain runs to 378 residues: Ribosomal RNA large subunit methyltransferase G (378 aa).

It belongs to the methyltransferase superfamily. RlmG family.

The protein localises to the cytoplasm. It carries out the reaction guanosine(1835) in 23S rRNA + S-adenosyl-L-methionine = N(2)-methylguanosine(1835) in 23S rRNA + S-adenosyl-L-homocysteine + H(+). Its function is as follows. Specifically methylates the guanine in position 1835 (m2G1835) of 23S rRNA. The protein is Ribosomal RNA large subunit methyltransferase G of Shewanella baltica (strain OS185).